Reading from the N-terminus, the 371-residue chain is Queuine tRNA-ribosyltransferase (371 aa).

The active-site Proton acceptor is the Asp-90. Substrate is bound by residues 90 to 94 (DSGGF), Asp-144, Gln-188, and Gly-215. Residues 246–252 (GVGTPED) form an RNA binding region. Asp-265 serves as the catalytic Nucleophile. Residues 270 to 274 (TRNAR) are RNA binding; important for wobble base 34 recognition. Zn(2+) is bound by residues Cys-303, Cys-305, Cys-308, and His-334.

It belongs to the queuine tRNA-ribosyltransferase family. As to quaternary structure, homodimer. Within each dimer, one monomer is responsible for RNA recognition and catalysis, while the other monomer binds to the replacement base PreQ1. The cofactor is Zn(2+).

It carries out the reaction 7-aminomethyl-7-carbaguanine + guanosine(34) in tRNA = 7-aminomethyl-7-carbaguanosine(34) in tRNA + guanine. It participates in tRNA modification; tRNA-queuosine biosynthesis. Catalyzes the base-exchange of a guanine (G) residue with the queuine precursor 7-aminomethyl-7-deazaguanine (PreQ1) at position 34 (anticodon wobble position) in tRNAs with GU(N) anticodons (tRNA-Asp, -Asn, -His and -Tyr). Catalysis occurs through a double-displacement mechanism. The nucleophile active site attacks the C1' of nucleotide 34 to detach the guanine base from the RNA, forming a covalent enzyme-RNA intermediate. The proton acceptor active site deprotonates the incoming PreQ1, allowing a nucleophilic attack on the C1' of the ribose to form the product. After dissociation, two additional enzymatic reactions on the tRNA convert PreQ1 to queuine (Q), resulting in the hypermodified nucleoside queuosine (7-(((4,5-cis-dihydroxy-2-cyclopenten-1-yl)amino)methyl)-7-deazaguanosine). This Neisseria gonorrhoeae (strain ATCC 700825 / FA 1090) protein is Queuine tRNA-ribosyltransferase.